The sequence spans 447 residues: Ribosomal protein uS12 methylthiotransferase RimO (447 aa).

The 111-residue stretch at 4-114 (PKVGFVSLGC…VMEAVHEYVP (111 aa)) folds into the MTTase N-terminal domain. [4Fe-4S] cluster contacts are provided by cysteine 13, cysteine 49, cysteine 78, cysteine 147, cysteine 151, and cysteine 154. Residues 133-370 (LTPKHYAYLK…MQVQQEISAA (238 aa)) form the Radical SAM core domain. In terms of domain architecture, TRAM spans 373–443 (QKRIGQTMTV…EYDLFAKLIQ (71 aa)).

The protein belongs to the methylthiotransferase family. RimO subfamily. It depends on [4Fe-4S] cluster as a cofactor.

It localises to the cytoplasm. It catalyses the reaction L-aspartate(89)-[ribosomal protein uS12]-hydrogen + (sulfur carrier)-SH + AH2 + 2 S-adenosyl-L-methionine = 3-methylsulfanyl-L-aspartate(89)-[ribosomal protein uS12]-hydrogen + (sulfur carrier)-H + 5'-deoxyadenosine + L-methionine + A + S-adenosyl-L-homocysteine + 2 H(+). Catalyzes the methylthiolation of an aspartic acid residue of ribosomal protein uS12. This Acinetobacter baylyi (strain ATCC 33305 / BD413 / ADP1) protein is Ribosomal protein uS12 methylthiotransferase RimO.